Here is a 124-residue protein sequence, read N- to C-terminus: Large ribosomal subunit protein bL12 (124 aa).

This sequence belongs to the bacterial ribosomal protein bL12 family. Homodimer. Part of the ribosomal stalk of the 50S ribosomal subunit. Forms a multimeric L10(L12)X complex, where L10 forms an elongated spine to which 2 to 4 L12 dimers bind in a sequential fashion. Binds GTP-bound translation factors.

Its function is as follows. Forms part of the ribosomal stalk which helps the ribosome interact with GTP-bound translation factors. Is thus essential for accurate translation. The sequence is that of Large ribosomal subunit protein bL12 from Rickettsia akari (strain Hartford).